The sequence spans 352 residues: N-acetyl-gamma-glutamyl-phosphate reductase (352 aa).

The active site involves C155.

Belongs to the NAGSA dehydrogenase family. Type 1 subfamily.

It is found in the cytoplasm. The enzyme catalyses N-acetyl-L-glutamate 5-semialdehyde + phosphate + NADP(+) = N-acetyl-L-glutamyl 5-phosphate + NADPH + H(+). It functions in the pathway amino-acid biosynthesis; L-arginine biosynthesis; N(2)-acetyl-L-ornithine from L-glutamate: step 3/4. Functionally, catalyzes the NADPH-dependent reduction of N-acetyl-5-glutamyl phosphate to yield N-acetyl-L-glutamate 5-semialdehyde. The chain is N-acetyl-gamma-glutamyl-phosphate reductase from Gloeothece citriformis (strain PCC 7424) (Cyanothece sp. (strain PCC 7424)).